A 174-amino-acid chain; its full sequence is Photosystem II repair protein PSB27-H1, chloroplastic (174 aa).

The tract at residues 1–35 (MASASATATLLKPNLPPHKPTIIASSVSPPLPPPR) is disordered. The residue at position 94 (threonine 94) is a Phosphothreonine. Phosphotyrosine is present on tyrosine 132.

This sequence belongs to the Psb27 family.

The protein localises to the plastid. Its subcellular location is the chloroplast thylakoid membrane. Its function is as follows. Probably involved in repair of photodamaged photosystem II (PSII). The protein is Photosystem II repair protein PSB27-H1, chloroplastic (PSB27-1) of Arabidopsis thaliana (Mouse-ear cress).